Reading from the N-terminus, the 398-residue chain is Putative L-rhamnonate dehydratase (398 aa).

Residues His-29 and Arg-55 each coordinate substrate. Mg(2+)-binding residues include Asp-221, Glu-247, and Glu-274. The Proton acceptor role is filled by His-324. Glu-344 contacts substrate.

Belongs to the mandelate racemase/muconate lactonizing enzyme family. RhamD subfamily. The cofactor is Mg(2+).

It carries out the reaction L-rhamnonate = 2-dehydro-3-deoxy-L-rhamnonate + H2O. Catalyzes the dehydration of L-rhamnonate to 2-keto-3-deoxy-L-rhamnonate (KDR). The chain is Putative L-rhamnonate dehydratase from Caldivirga maquilingensis (strain ATCC 700844 / DSM 13496 / JCM 10307 / IC-167).